The sequence spans 215 residues: Agamous-like MADS-box protein AGL63 (215 aa).

One can recognise an MADS-box domain in the interval 1–61; it reads MRKGKRVIKK…NRLYDFCSNS (61 aa). Residues 90–178 enclose the K-box domain; that stretch reads CSDCVKTKES…GSSWEQLMWQ (89 aa). Disordered regions lie at residues 143–172 and 184–215; these read ARKSEFMHQQQQQQTDQKLKGKEKGQGSSW and MTCQRQKDPAPANEGGVPFLRWGTTHRRSSPP.

In terms of assembly, forms homodimer. Interacts with AGL16. In terms of tissue distribution, expressed in bud pedicels, petals, anthers, style, ovary, seeds and embryos.

The protein localises to the nucleus. In terms of biological role, probable transcription factor involved in the regulation of fruit growth. Contributes to integument development. Controls organ size via cell expansion. Involved in the regulation of longitudinal growth of the fruit evenly throughout the radial axis. Functions redundantly with TT16/AGL32 to repress nucellus growth and promote its degeneration. The protein is Agamous-like MADS-box protein AGL63 of Arabidopsis thaliana (Mouse-ear cress).